Consider the following 408-residue polypeptide: Aminoacylase-1 (408 aa).

Position 80 (His80) interacts with Zn(2+). The active site involves Asp82. A Zn(2+)-binding site is contributed by Asp113. The active-site Proton acceptor is Glu147. Residues Glu148, Glu175, and His373 each coordinate Zn(2+).

This sequence belongs to the peptidase M20A family. Homodimer. Interacts with SPHK1. Zn(2+) is required as a cofactor. Expression is highest in kidney, strong in brain and weaker in placenta and spleen.

It is found in the cytoplasm. It catalyses the reaction an N-acyl-L-amino acid + H2O = an L-alpha-amino acid + a carboxylate. It carries out the reaction N-acetyl-L-methionine + H2O = L-methionine + acetate. The catalysed reaction is N-acetyl-L-glutamine + H2O = L-glutamine + acetate. Catalyzes the hydrolysis of N-acetylated amino acids to acetate and free amino acids. This Homo sapiens (Human) protein is Aminoacylase-1 (ACY1).